The following is a 309-amino-acid chain: Small ribosomal subunit protein mS23 (309 aa).

It belongs to the mitochondrion-specific ribosomal protein mS23 family. Component of the mitochondrial small ribosomal subunit.

The protein resides in the mitochondrion. In Lodderomyces elongisporus (strain ATCC 11503 / CBS 2605 / JCM 1781 / NBRC 1676 / NRRL YB-4239) (Yeast), this protein is Small ribosomal subunit protein mS23 (RSM25).